Consider the following 408-residue polypeptide: Acetate kinase (408 aa).

A Mg(2+)-binding site is contributed by Asn-7. An ATP-binding site is contributed by Lys-14. Arg-91 is a binding site for substrate. Asp-148 functions as the Proton donor/acceptor in the catalytic mechanism. Residues 208 to 212, 283 to 285, and 331 to 335 each bind ATP; these read HLGNG, DFR, and GIGEN. Mg(2+) is bound at residue Glu-384.

Belongs to the acetokinase family. In terms of assembly, homodimer. Mg(2+) serves as cofactor. It depends on Mn(2+) as a cofactor.

It is found in the cytoplasm. The enzyme catalyses acetate + ATP = acetyl phosphate + ADP. Its pathway is metabolic intermediate biosynthesis; acetyl-CoA biosynthesis; acetyl-CoA from acetate: step 1/2. Its function is as follows. Catalyzes the formation of acetyl phosphate from acetate and ATP. Can also catalyze the reverse reaction. The sequence is that of Acetate kinase from Methanosarcina acetivorans (strain ATCC 35395 / DSM 2834 / JCM 12185 / C2A).